Consider the following 563-residue polypeptide: uncharacterized protein (563 aa).

The Cytoplasmic segment spans residues 1-13 (MASRSCICQVSAG). Residues 14 to 34 (IIFLIGAALLVAGLVIVLNVF) traverse the membrane as a helical segment. The Lumenal segment spans residues 35 to 528 (PNIVNNQIND…LFTPVSTVNT (494 aa)). N-linked (GlcNAc...) asparagine glycans are attached at residues N43, N112, N133, N188, N265, N295, N315, and N502. A helical transmembrane segment spans residues 529 to 549 (ICWIAVGLGAGLIALSIVMVI). Residues 550 to 563 (VSFCCFRDEHHKTS) lie on the Cytoplasmic side of the membrane.

This sequence belongs to the CD36 family.

The protein resides in the membrane. This is an uncharacterized protein from Caenorhabditis elegans.